The primary structure comprises 954 residues: DNA repair and telomere maintenance protein NBS1 (954 aa).

The 64-residue stretch at Tyr22–Ile85 folds into the FHA domain. BRCT domains follow at residues Thr107–Val186 and Gly244–Ile349. Over residues Val368–Gln377 the composition is skewed to polar residues. Disordered stretches follow at residues Val368–Phe431, Gln444–Glu506, Ile528–Asp580, Val630–Arg654, and Gly692–Arg954. The segment covering Ser378–Glu393 has biased composition (basic and acidic residues). Basic residues predominate over residues Pro416–Phe428. The segment covering Pro458–Glu471 has biased composition (polar residues). Over residues Pro541–Glu554 the composition is skewed to acidic residues. Basic and acidic residues-rich tracts occupy residues Arg640–Arg654 and Gly704–Thr715. Low complexity predominate over residues Asp726–Gly737. Residues Lys738–Gly751 show a composition bias toward basic and acidic residues. Low complexity-rich tracts occupy residues Glu801–Pro815 and Arg826–Gln842. Positions Gly936–Glu945 are enriched in acidic residues.

This sequence belongs to the Nibrin family. In terms of assembly, component of the MRN complex composed of two heterodimers RAD50 and MRE11 associated with a single NBS1.

The protein resides in the nucleus. The protein localises to the chromosome. Component of the MRN complex, which plays a central role in double-strand break (DSB) repair, DNA recombination, maintenance of telomere integrity and meiosis. The MRN complex is involved in the repair of DNA double-strand breaks (DSBs) via homologous recombination (HR), an error-free mechanism which primarily occurs during S and G2 phases. The complex (1) mediates the end resection of damaged DNA, which generates proper single-stranded DNA, a key initial steps in HR, and is (2) required for the recruitment of other repair factors and efficient activation of ATM and ATR upon DNA damage. The MRN complex possesses single-strand endonuclease activity and double-strand-specific 3'-5' exonuclease activity, which are provided by MRE11, to initiate end resection, which is required for single-strand invasion and recombination. Within the MRN complex, NBS1 acts as a protein-protein adapter, which specifically recognizes and binds phosphorylated proteins, promoting their recruitment to DNA damage sites. Recruits MRE11 and RAD50 components of the MRN complex to DSBs in response to DNA damage. The polypeptide is DNA repair and telomere maintenance protein NBS1 (Chaetomium thermophilum (strain DSM 1495 / CBS 144.50 / IMI 039719) (Thermochaetoides thermophila)).